We begin with the raw amino-acid sequence, 171 residues long: Inosine/xanthosine triphosphatase (171 aa).

Position 8–13 (8–13 (TTNPAK)) interacts with substrate. Glu-38 serves as a coordination point for Mg(2+).

The protein belongs to the YjjX NTPase family. In terms of assembly, homodimer. Mg(2+) is required as a cofactor. Requires Mn(2+) as cofactor.

It carries out the reaction XTP + H2O = XDP + phosphate + H(+). The catalysed reaction is ITP + H2O = IDP + phosphate + H(+). Phosphatase that hydrolyzes non-canonical purine nucleotides such as XTP and ITP to their respective diphosphate derivatives. Probably excludes non-canonical purines from DNA/RNA precursor pool, thus preventing their incorporation into DNA/RNA and avoiding chromosomal lesions. The protein is Inosine/xanthosine triphosphatase of Klebsiella pneumoniae (strain 342).